A 342-amino-acid chain; its full sequence is Pyrophosphate--fructose 6-phosphate 1-phosphotransferase (342 aa).

Position 10 (Gly-10) interacts with diphosphate. Glu-103 contacts Mg(2+). Substrate-binding positions include 126–128 (TID), Arg-163, 170–172 (MGR), Glu-222, Arg-266, and 272–275 (HVQR). The Proton acceptor role is filled by Asp-128.

This sequence belongs to the phosphofructokinase type A (PFKA) family. Mixed-substrate PFK group III subfamily. In terms of assembly, homodimer or homotetramer. Mg(2+) is required as a cofactor.

Its subcellular location is the cytoplasm. It catalyses the reaction beta-D-fructose 6-phosphate + diphosphate = beta-D-fructose 1,6-bisphosphate + phosphate + H(+). It participates in carbohydrate degradation; glycolysis; D-glyceraldehyde 3-phosphate and glycerone phosphate from D-glucose: step 3/4. Non-allosteric. Catalyzes the phosphorylation of D-fructose 6-phosphate, the first committing step of glycolysis. Uses inorganic phosphate (PPi) as phosphoryl donor instead of ATP like common ATP-dependent phosphofructokinases (ATP-PFKs), which renders the reaction reversible, and can thus function both in glycolysis and gluconeogenesis. Consistently, PPi-PFK can replace the enzymes of both the forward (ATP-PFK) and reverse (fructose-bisphosphatase (FBPase)) reactions. This chain is Pyrophosphate--fructose 6-phosphate 1-phosphotransferase, found in Streptomyces coelicolor (strain ATCC BAA-471 / A3(2) / M145).